Consider the following 544-residue polypeptide: Intercellular adhesion molecule 3 (544 aa).

A signal peptide spans 1–31; that stretch reads MIASGPPPRVYWTSLIFLLLACCLLPTGAQG. The Extracellular portion of the chain corresponds to 32–486; sequence QTYQVRVEPK…MMDVQGRNPV (455 aa). Residues 48 to 105 enclose the Ig-like C2-type 1 domain; sequence GEPLVVNCTLDCPGPGLISLETALSKEPHSRGLGWAAFRLTNVTGDMEILCSGICNKS. N-linked (GlcNAc...) asparagine glycosylation is found at N54, N89, N103, N112, N138, N190, N209, N243, N267, N296, N321, and N326. 2 cysteine pairs are disulfide-bonded: C55/C98 and C59/C102. Residues 134-200 enclose the Ig-like C2-type 2 domain; it reads GEELNLSCLV…FSCRSELDLR (67 aa). C141 and C193 form a disulfide bridge. The Ig-like C2-type 3 domain maps to 237 to 302; sequence ETSWPVNCSL…IVCNVTLGVE (66 aa). C244 and C295 are disulfide-bonded. The Ig-like C2-type 4 domain occupies 330 to 383; it reads GTPVTVTCAAGPQVQVMLDGVPAAVPGQPAQLQLKATEMDDRRTFFCNATLKVH. A disulfide bridge links C337 with C376. N-linked (GlcNAc...) asparagine glycans are attached at residues N377, N390, and N456. Residues 417–470 form the Ig-like C2-type 5 domain; sequence KTMHILQCQARGNPNPQLQCLREGSKFKVPVGIPFLVLLNYSGTYSCQAASSRG. C424 and C463 are joined by a disulfide. A helical transmembrane segment spans residues 487–511; it reads TINIVLGVLAILGLVTLAAASVYVF. Over 512-544 the chain is Cytoplasmic; the sequence is WVQRQHDIYHLTPRSTRWRLTSTQPVTVAEELS.

Belongs to the immunoglobulin superfamily. ICAM family. In terms of assembly, interacts with moesin/MSN. In terms of tissue distribution, leukocytes.

The protein localises to the membrane. Functionally, ICAM proteins are ligands for the leukocyte adhesion protein LFA-1 (integrin alpha-L/beta-2). ICAM3 is also a ligand for integrin alpha-D/beta-2. In association with integrin alpha-L/beta-2, contributes to apoptotic neutrophil phagocytosis by macrophages. The chain is Intercellular adhesion molecule 3 (ICAM3) from Bos taurus (Bovine).